The following is a 535-amino-acid chain: MTILSAERAPSRKILAVVTVGRYTCAAPILEICRILHTRGHTIEFACLDGHQRLATPHAFVSKIHVVGRNMSVEEDKSLYRLFDESDASTAQGRKGTFRALQFFHSWWPETYRNLKALVSNPEHRPDFILADLLADACIDIMNEFHIPLAVHYPQMPIQMAPQKYIPGMPGAQLKHLSSEHASLWERLMEEYHVLQLLFAMKDYIFFQRNMRREAGLGPRPPPRKPDYLVLVNSFFGLEVPKDLPPLMIPIGPVMADSFPLMEPSSGLVEFLESRKQVIYVAFGSHVELPGWRVRRLIDGLDQALAAGDIDGVIWAWKNPMPILEDSETSTTTDGISDSKTDYNAVLRNQDERIRIMHWAPQRAILAHPSTCLYLSHCGASSTMEAVYHGVPVVAMPIYGDQLANGKRLEAAGVGINMNRNNFTAEGLAQNIGRIVRDDDGLFARNVLRLQRIATANSRRKHVAADRIEEVMYDSELRFGDGSKQGVELRPTHLQTPDSRMSWVRASNLDLYIVCIAFVAVPVGVARWLSKVWFA.

Residues asparagine 70 and asparagine 422 are each glycosylated (N-linked (GlcNAc...) asparagine). A helical membrane pass occupies residues 506–526; it reads ASNLDLYIVCIAFVAVPVGVA.

The protein belongs to the glycosyltransferase 28 family.

It is found in the membrane. The catalysed reaction is stromemycin aglycone + UDP-alpha-D-glucose = stromemycin + UDP + H(+). It catalyses the reaction exophillate aglycone + UDP-alpha-D-glucose = exophillate + UDP + H(+). The protein operates within mycotoxin biosynthesis. In terms of biological role, UDP-glycosyltransferase; part of the gene cluster that mediates the biosynthesis of stromemycin, a depside C-glucoside with two unsaturated C9 side chains belonging to aromatic polyketide glycosides. Acts as the tailoring enzyme responsible for 3-C-glucosylation of bininalkenylresorcylic acid produced by the combined action of the HR-PKS stmA and the NR-PKS stmB to yield stromemycin. Possesses a relatively strict acceptor specificity towards bininalkenylresorcylic acid for C-glycosylation, but is able to use several donors including UDP-alpha-D-galactose, UDP-alpha-D-xylose, UDP-alpha-D-4-keto-6-deoxyglucose, UDP-alpha-D-quinovose, and UDP-beta-L-rhamnose. This Aspergillus ustus protein is UDP-glycosyltransferase stmC.